Reading from the N-terminus, the 404-residue chain is S-adenosylmethionine synthase (404 aa).

H17 provides a ligand contact to ATP. D19 contributes to the Mg(2+) binding site. E45 serves as a coordination point for K(+). 2 residues coordinate L-methionine: E58 and Q101. Residues 101 to 111 (QSADINRGVDR) are flexible loop. ATP-binding positions include 172–174 (DAK), 245–246 (RF), D254, 260–261 (RK), A277, and K281. D254 serves as a coordination point for L-methionine. K285 is an L-methionine binding site.

Belongs to the AdoMet synthase family. Homotetramer; dimer of dimers. It depends on Mg(2+) as a cofactor. The cofactor is K(+).

It localises to the cytoplasm. The catalysed reaction is L-methionine + ATP + H2O = S-adenosyl-L-methionine + phosphate + diphosphate. It functions in the pathway amino-acid biosynthesis; S-adenosyl-L-methionine biosynthesis; S-adenosyl-L-methionine from L-methionine: step 1/1. Catalyzes the formation of S-adenosylmethionine (AdoMet) from methionine and ATP. The overall synthetic reaction is composed of two sequential steps, AdoMet formation and the subsequent tripolyphosphate hydrolysis which occurs prior to release of AdoMet from the enzyme. This Chlorobium luteolum (strain DSM 273 / BCRC 81028 / 2530) (Pelodictyon luteolum) protein is S-adenosylmethionine synthase.